The sequence spans 182 residues: Large ribosomal subunit protein uL16 (182 aa).

It belongs to the universal ribosomal protein uL16 family. As to quaternary structure, part of the 50S ribosomal subunit.

This is Large ribosomal subunit protein uL16 from Thermococcus kodakarensis (strain ATCC BAA-918 / JCM 12380 / KOD1) (Pyrococcus kodakaraensis (strain KOD1)).